The sequence spans 430 residues: Serine--tRNA ligase (430 aa).

237-239 (TAE) contributes to the L-serine binding site. 268–270 (RSE) provides a ligand contact to ATP. Glu-291 lines the L-serine pocket. 355–358 (EISS) lines the ATP pocket. Ser-391 contributes to the L-serine binding site.

The protein belongs to the class-II aminoacyl-tRNA synthetase family. Type-1 seryl-tRNA synthetase subfamily. Homodimer. The tRNA molecule binds across the dimer.

It is found in the cytoplasm. It catalyses the reaction tRNA(Ser) + L-serine + ATP = L-seryl-tRNA(Ser) + AMP + diphosphate + H(+). The catalysed reaction is tRNA(Sec) + L-serine + ATP = L-seryl-tRNA(Sec) + AMP + diphosphate + H(+). It functions in the pathway aminoacyl-tRNA biosynthesis; selenocysteinyl-tRNA(Sec) biosynthesis; L-seryl-tRNA(Sec) from L-serine and tRNA(Sec): step 1/1. In terms of biological role, catalyzes the attachment of serine to tRNA(Ser). Is also able to aminoacylate tRNA(Sec) with serine, to form the misacylated tRNA L-seryl-tRNA(Sec), which will be further converted into selenocysteinyl-tRNA(Sec). The chain is Serine--tRNA ligase from Shigella dysenteriae serotype 1 (strain Sd197).